The primary structure comprises 146 residues: Hemoglobin subunit beta (146 aa).

An N-acetylvaline modification is found at V1. Residues 2–146 (HLTGEEKSAV…VANALAHKYH (145 aa)) enclose the Globin domain. T12 is modified (phosphothreonine). Position 44 is a phosphoserine (S44). K59 carries the N6-acetyllysine modification. A heme b-binding site is contributed by H63. Residue K82 is modified to N6-acetyllysine. H92 contacts heme b. C93 is subject to S-nitrosocysteine. Position 144 is an N6-acetyllysine (K144).

Belongs to the globin family. In terms of assembly, heterotetramer of two alpha chains and two beta chains. Red blood cells.

Involved in oxygen transport from the lung to the various peripheral tissues. The chain is Hemoglobin subunit beta (HBB) from Leontocebus fuscicollis (Brown-mantled tamarin).